Here is a 536-residue protein sequence, read N- to C-terminus: Solute carrier family 2, facilitated glucose transporter member 10 (536 aa).

Over M1–S15 the chain is Cytoplasmic. The helical transmembrane segment at L16–L36 threads the bilayer. Residues Q37–E48 lie on the Extracellular side of the membrane. The chain crosses the membrane as a helical span at residues L49 to I69. The Cytoplasmic portion of the chain corresponds to D70 to N82. Residues A83–L103 traverse the membrane as a helical segment. The Extracellular portion of the chain corresponds to G104–S107. The helical transmembrane segment at V108–G128 threads the bilayer. Topologically, residues P129–R132 are cytoplasmic. The chain crosses the membrane as a helical span at residues G133–L153. At N154–H166 the chain is on the extracellular side. Residues M167–A187 form a helical membrane-spanning segment. At G188–T232 the chain is on the cytoplasmic side. The helical transmembrane segment at V233–Y253 threads the bilayer. A D-glucose-binding site is contributed by Q242–Q243. The Extracellular segment spans residues A254–A269. The chain crosses the membrane as a helical span at residues V270 to L290. Topologically, residues V291–V298 are cytoplasmic. A helical membrane pass occupies residues L299–F319. Over A320–T402 the chain is Extracellular. The chain crosses the membrane as a helical span at residues L403–F423. Residues G424–R442 are Cytoplasmic-facing. Position 428 (W428) interacts with D-glucose. A helical membrane pass occupies residues A443 to L463. Over D464–A468 the chain is Extracellular. The chain crosses the membrane as a helical span at residues I469–I489. Residues Y490–S536 are Cytoplasmic-facing.

This sequence belongs to the major facilitator superfamily. Sugar transporter (TC 2.A.1.1) family. Glucose transporter subfamily.

The protein localises to the endomembrane system. Its subcellular location is the cytoplasm. It localises to the perinuclear region. The enzyme catalyses D-glucose(out) = D-glucose(in). In terms of biological role, facilitative glucose transporter required for the development of the cardiovascular system. This chain is Solute carrier family 2, facilitated glucose transporter member 10, found in Mus musculus (Mouse).